The chain runs to 202 residues: Na(+)-translocating NADH-quinone reductase subunit E (202 aa).

Helical transmembrane passes span 11-31 (AVFIENLALSFFLGMCTFLAV), 35-55 (VTTSIGLGVAVIVVLGISVPV), 81-101 (FLRFLTFIGVIAALVQILEMA), 114-134 (GIFLPLITVNCAIFGAVSFMV), 144-164 (VVYGIGAGVGWALAITLLAGI), and 180-200 (LGITFITVGLMALGFMSFSGI).

Belongs to the NqrDE/RnfAE family. As to quaternary structure, composed of six subunits; NqrA, NqrB, NqrC, NqrD, NqrE and NqrF.

Its subcellular location is the cell inner membrane. The enzyme catalyses a ubiquinone + n Na(+)(in) + NADH + H(+) = a ubiquinol + n Na(+)(out) + NAD(+). In terms of biological role, NQR complex catalyzes the reduction of ubiquinone-1 to ubiquinol by two successive reactions, coupled with the transport of Na(+) ions from the cytoplasm to the periplasm. NqrA to NqrE are probably involved in the second step, the conversion of ubisemiquinone to ubiquinol. This Pseudoalteromonas translucida (strain TAC 125) protein is Na(+)-translocating NADH-quinone reductase subunit E.